The sequence spans 1010 residues: Regulator of telomere elongation helicase 1 homolog (1010 aa).

The Helicase ATP-binding domain maps to 7–333 (NGITVNFPFE…KEMLLQLEKT (327 aa)). 42 to 49 (SPTGTGKT) is a binding site for ATP. Positions 157, 175, 184, and 220 each coordinate [4Fe-4S] cluster. The DEAH box motif lies at 263-266 (DEAH). The tract at residues 912 to 931 (TSDDEDPGRTGDDPTRQAPE) is disordered. A compositionally biased stretch (basic and acidic residues) spans 918-931 (PGRTGDDPTRQAPE).

The protein belongs to the helicase family. RAD3/XPD subfamily.

The protein resides in the nucleus. The enzyme catalyses ATP + H2O = ADP + phosphate + H(+). Its function is as follows. A probable ATP-dependent DNA helicase implicated in DNA repair and the maintenance of genomic stability. Acts as an anti-recombinase to counteract toxic recombination and limit crossover during meiosis. Regulates meiotic recombination and crossover homeostasis by physically dissociating strand invasion events and thereby promotes noncrossover repair by meiotic synthesis dependent strand annealing (SDSA) as well as disassembly of D loop recombination intermediates. This is Regulator of telomere elongation helicase 1 homolog from Aedes aegypti (Yellowfever mosquito).